A 115-amino-acid polypeptide reads, in one-letter code: MLLLRWPTFCCLWVFGLGQLEQTELSVTRETDESAQISCIVSLPYFSNTAIHWYRQKAKKFEYLIYVSTNYNQRPLGGKNKKIEASKDFQTSTSTLKINYLKKEDEATYYCAVWI.

A signal peptide spans 1-18; it reads MLLLRWPTFCCLWVFGLG. The interval 19-115 is v segment; that stretch reads QLEQTELSVT…EATYYCAVWI (97 aa).

The sequence is that of T-cell receptor gamma chain V region V108B (Tcrg-V1) from Mus musculus (Mouse).